The primary structure comprises 259 residues: Putative zinc metalloprotease Rip2 (259 aa).

Helical transmembrane passes span Pro14–Gly34 and Pro39–Leu59. A Zn(2+)-binding site is contributed by His60. Glu61 is an active-site residue. His64 contacts Zn(2+). Transmembrane regions (helical) follow at residues Gly97–Val117, Thr128–Ala148, Ile156–Val176, and Leu215–Phe235.

This sequence belongs to the peptidase M50B family. Zn(2+) serves as cofactor.

It is found in the cell membrane. This Mycobacterium tuberculosis (strain ATCC 35801 / TMC 107 / Erdman) protein is Putative zinc metalloprotease Rip2 (rip2).